We begin with the raw amino-acid sequence, 998 residues long: MAQVVMSALPAEDEESSESRMVVTFLMSALESMCKELAKSKAEVACIAVYETDVFVVGTERGRAFVNTRKDFQKDFVKYCVEEEEKAAEMHKMKSTTQANRMSVDAVEIETLRKTVEDYFCFCYGKALGKSTVVPVPYEKMLRDQSAVVVQGLPEGVAFKHPEHYDLATLKWILENKAGISFIIKRPFLEPKKHLGGRVLAAEAERSMLSPSGSCGPIKVKTEPTEDSGISLEMAAVTVKEESEDPDYYQYNIQGPSETDGVDEKLPLSKALQGSHHSSEGNEGTEVEVPAEDSTQHVPSETSEDPEVEVTIEDDDYSPPTKRLKSTEPPPPPPVPEPANAGKRKVREFNFEKWNARITDLRKQVEELFERKYAQAIKAKGPVTIPYPLFQSHVEDLYVEGLPEGIPFRRPSTYGIPRLERILLAKERIRFVIKKHELLNSTREDLQLDKPASGVKEEWYARITKLRKMVDQLFCKKFAEALGSTEAKAVPYQKFEAHPNDLYVEGLPENIPFRSPSWYGIPRLEKIIQVGNRIKFVIKRPELLTHSTTEVTQPRTNTPVKEDWNVRITKLRKQVEEIFNLKFAQALGLTEAVKVPYPVFESNPEFLYVEGLPEGIPFRSPTWFGIPRLERIVRGSNKIKFVVKKPELVVSYLPPGMASKINTKALQSPKRPRSPGSNSKVPEIEVTVEGPNNSSPQTSAVRTPTQTNGSNVPFKPRGREFSFEAWNAKITDLKQKVENLFNEKCGEALGLKQAVKVPFALFESFPEDFYVEGLPEGVPFRRPSTFGIPRLEKILRNKAKIKFIIKKPEMFETAIKESTSSKSPPRKINSSPNVNTTASGVEDLNIIQVTIPDDDNERLSKVEKARQLREQVNDLFSRKFGEAIGMGFPVKVPYRKITINPGCVVVDGMPPGVSFKAPSYLEISSMRRILDSAEFIKFTVIRPFPGLVINNQLVDQNESEGPVIQESAEASQLEVPVTEEIKETDGSSQIKQEPDPTW.

At Ala2 the chain carries N-acetylalanine. Ser19 bears the Phosphoserine mark. Residues Lys35, Lys86, Lys92, and Lys94 each participate in a glycyl lysine isopeptide (Lys-Gly) (interchain with G-Cter in SUMO2) cross-link. At Ser103 the chain carries Phosphoserine. Residues 103–197 form a GTF2I-like 1 repeat; that stretch reads SVDAVEIETL…FLEPKKHLGG (95 aa). Lys130 bears the N6-acetyllysine; alternate mark. Lys130 is covalently cross-linked (Glycyl lysine isopeptide (Lys-Gly) (interchain with G-Cter in SUMO2); alternate). Glycyl lysine isopeptide (Lys-Gly) (interchain with G-Cter in SUMO2) cross-links involve residues Lys140 and Lys185. Phosphoserine occurs at positions 207, 210, and 214. Lys219 is covalently cross-linked (Glycyl lysine isopeptide (Lys-Gly) (interchain with G-Cter in SUMO2)). Lys221 is covalently cross-linked (Glycyl lysine isopeptide (Lys-Gly) (interchain with G-Cter in SUMO2); alternate). Lys221 is covalently cross-linked (Glycyl lysine isopeptide (Lys-Gly) (interchain with G-Cter in SUMO1); alternate). The tract at residues 241-341 is disordered; it reads EESEDPDYYQ…PPPVPEPANA (101 aa). At Tyr248 the chain carries Phosphotyrosine; by BTK. Residues 302–317 are compositionally biased toward acidic residues; it reads TSEDPEVEVTIEDDDY. The Nuclear localization signal motif lies at 319–326; sequence PPTKRLKS. Lys325 is covalently cross-linked (Glycyl lysine isopeptide (Lys-Gly) (interchain with G-Cter in SUMO2)). Residues 328–337 show a composition bias toward pro residues; sequence EPPPPPPVPE. Residue Lys343 forms a Glycyl lysine isopeptide (Lys-Gly) (interchain with G-Cter in SUMO2) linkage. The GTF2I-like 2 repeat unit spans residues 352–446; it reads EKWNARITDL…ELLNSTREDL (95 aa). N6-acetyllysine; alternate is present on Lys353. Lys353 is covalently cross-linked (Glycyl lysine isopeptide (Lys-Gly) (interchain with G-Cter in SUMO2); alternate). Lys380 is covalently cross-linked (Glycyl lysine isopeptide (Lys-Gly) (interchain with G-Cter in SUMO2)). Tyr398 bears the Phosphotyrosine; by BTK mark. Ser412 is modified (phosphoserine; by PKG/PRKG1). Lys435 is covalently cross-linked (Glycyl lysine isopeptide (Lys-Gly) (interchain with G-Cter in SUMO2)). Lys450 bears the N6-acetyllysine; alternate mark. A Glycyl lysine isopeptide (Lys-Gly) (interchain with G-Cter in SUMO2); alternate cross-link involves residue Lys450. Glycyl lysine isopeptide (Lys-Gly) (interchain with G-Cter in SUMO2) cross-links involve residues Lys456, Lys488, and Lys494. The GTF2I-like 3 repeat unit spans residues 457-551; it reads EEWYARITKL…ELLTHSTTEV (95 aa). At Tyr503 the chain carries Phosphotyrosine; by BTK. Ser517 is subject to Phosphoserine. Lys526 participates in a covalent cross-link: Glycyl lysine isopeptide (Lys-Gly) (interchain with G-Cter in SUMO2). Residues Thr556 and Thr558 each carry the phosphothreonine modification. A Glycyl lysine isopeptide (Lys-Gly) (interchain with G-Cter in SUMO2) cross-link involves residue Lys561. One copy of the GTF2I-like 4 repeat lies at 562-656; it reads EDWNVRITKL…ELVVSYLPPG (95 aa). Glycyl lysine isopeptide (Lys-Gly) (interchain with G-Cter in SUMO2) cross-links involve residues Lys660 and Lys664. The interval 661–714 is disordered; the sequence is INTKALQSPKRPRSPGSNSKVPEIEVTVEGPNNSSPQTSAVRTPTQTNGSNVPF. Ser668 bears the Phosphoserine mark. Lys670 is covalently cross-linked (Glycyl lysine isopeptide (Lys-Gly) (interchain with G-Cter in SUMO2)). Ser674 bears the Phosphoserine mark. Lys680 participates in a covalent cross-link: Glycyl lysine isopeptide (Lys-Gly) (interchain with G-Cter in SUMO2). Residues 690–711 are compositionally biased toward polar residues; that stretch reads GPNNSSPQTSAVRTPTQTNGSN. Lys715 is modified (N6-acetyllysine; alternate). A Glycyl lysine isopeptide (Lys-Gly) (interchain with G-Cter in SUMO2); alternate cross-link involves residue Lys715. Ser722 is modified (phosphoserine). Residues 724 to 818 form a GTF2I-like 5 repeat; that stretch reads EAWNAKITDL…EMFETAIKES (95 aa). Residue Ser784 is modified to Phosphoserine; by PKG/PRKG1. Residue Lys816 forms a Glycyl lysine isopeptide (Lys-Gly) (interchain with G-Cter in SUMO2) linkage. The interval 816 to 836 is disordered; sequence KESTSSKSPPRKINSSPNVNT. Ser823 is modified (phosphoserine). Residues Lys827, Lys861, Lys864, Lys879, and Lys891 each participate in a glycyl lysine isopeptide (Lys-Gly) (interchain with G-Cter in SUMO2) cross-link. The stretch at 859–953 is one GTF2I-like 6 repeat; sequence LSKVEKARQL…FPGLVINNQL (95 aa). A disordered region spans residues 960–998; it reads EGPVIQESAEASQLEVPVTEEIKETDGSSQIKQEPDPTW. Lys991 is covalently cross-linked (Glycyl lysine isopeptide (Lys-Gly) (interchain with G-Cter in SUMO2); alternate). Lys991 participates in a covalent cross-link: Glycyl lysine isopeptide (Lys-Gly) (interchain with G-Cter in SUMO1); alternate.

The protein belongs to the TFII-I family. Homodimer (Potential). Interacts with SRF and PHOX1. Binds a pyrimidine-rich initiator (Inr) and a recognition site (E-box) for upstream stimulatory factor 1 (USF1). Associates with the PH domain of Bruton's tyrosine kinase (BTK). May be a component of a BHC histone deacetylase complex that contains HDAC1, HDAC2, HMG20B/BRAF35, KDM1A, RCOR1/CoREST, PHF21A/BHC80, ZMYM2, ZNF217, ZMYM3, GSE1 and GTF2I. Interacts with BTK and ARID3A. Interacts with isoform beta of PRKG1. Transiently phosphorylated on tyrosine residues by BTK in response to B-cell receptor stimulation. Phosphorylation on Tyr-248 and Tyr-398, and perhaps, on Tyr-503 contributes to BTK-mediated transcriptional activation. In terms of processing, sumoylated. As to expression, ubiquitous.

Its subcellular location is the cytoplasm. It localises to the nucleus. Functionally, interacts with the basal transcription machinery by coordinating the formation of a multiprotein complex at the C-FOS promoter, and linking specific signal responsive activator complexes. Promotes the formation of stable high-order complexes of SRF and PHOX1 and interacts cooperatively with PHOX1 to promote serum-inducible transcription of a reporter gene deriven by the C-FOS serum response element (SRE). Acts as a coregulator for USF1 by binding independently two promoter elements, a pyrimidine-rich initiator (Inr) and an upstream E-box. Required for the formation of functional ARID3A DNA-binding complexes and for activation of immunoglobulin heavy-chain transcription upon B-lymphocyte activation. The protein is General transcription factor II-I (Gtf2i) of Mus musculus (Mouse).